A 255-amino-acid chain; its full sequence is Acetyl-coenzyme A carboxylase carboxyl transferase subunit alpha (255 aa).

The 235-residue stretch at 1–235 (MNIAKIVREA…KKELQTELAR (235 aa)) folds into the CoA carboxyltransferase C-terminal domain.

Belongs to the AccA family. Acetyl-CoA carboxylase is a heterohexamer composed of biotin carboxyl carrier protein (AccB), biotin carboxylase (AccC) and two subunits each of ACCase subunit alpha (AccA) and ACCase subunit beta (AccD).

The protein localises to the cytoplasm. The enzyme catalyses N(6)-carboxybiotinyl-L-lysyl-[protein] + acetyl-CoA = N(6)-biotinyl-L-lysyl-[protein] + malonyl-CoA. Its pathway is lipid metabolism; malonyl-CoA biosynthesis; malonyl-CoA from acetyl-CoA: step 1/1. Functionally, component of the acetyl coenzyme A carboxylase (ACC) complex. First, biotin carboxylase catalyzes the carboxylation of biotin on its carrier protein (BCCP) and then the CO(2) group is transferred by the carboxyltransferase to acetyl-CoA to form malonyl-CoA. The polypeptide is Acetyl-coenzyme A carboxylase carboxyl transferase subunit alpha (Streptococcus pneumoniae serotype 2 (strain D39 / NCTC 7466)).